A 305-amino-acid chain; its full sequence is Translation initiation factor eIF2B subunit alpha (305 aa).

At Lys-35 the chain carries N6-acetyllysine.

The protein belongs to the eIF-2B alpha/beta/delta subunits family. As to quaternary structure, component of the translation initiation factor 2B (eIF2B) complex which is a heterodecamer of two sets of five different subunits: alpha, beta, gamma, delta and epsilon. Subunits alpha, beta and delta comprise a regulatory subcomplex and subunits epsilon and gamma comprise a catalytic subcomplex. Within the complex, the hexameric regulatory complex resides at the center, with the two heterodimeric catalytic subcomplexes bound on opposite sides.

The protein localises to the cytoplasm. The protein resides in the cytosol. Its activity is regulated as follows. Activated by the chemical integrated stress response (ISR) inhibitor ISRIB which stimulates guanine nucleotide exchange factor activity for both phosphorylated and unphosphorylated eIF2. Acts as a component of the translation initiation factor 2B (eIF2B) complex, which catalyzes the exchange of GDP for GTP on eukaryotic initiation factor 2 (eIF2) gamma subunit. Its guanine nucleotide exchange factor activity is repressed when bound to eIF2 complex phosphorylated on the alpha subunit, thereby limiting the amount of methionyl-initiator methionine tRNA available to the ribosome and consequently global translation is repressed. The chain is Translation initiation factor eIF2B subunit alpha (EIF2B1) from Macaca fascicularis (Crab-eating macaque).